The primary structure comprises 218 residues: Epoxyqueuosine reductase QueH (218 aa).

[4Fe-4S] cluster contacts are provided by C22, C23, C101, and C104. C184 and C186 are joined by a disulfide.

This sequence belongs to the QueH family.

It catalyses the reaction epoxyqueuosine(34) in tRNA + AH2 = queuosine(34) in tRNA + A + H2O. Its pathway is tRNA modification; tRNA-queuosine biosynthesis. In terms of biological role, catalyzes the conversion of epoxyqueuosine (oQ) to queuosine (Q), which is a hypermodified base found in the wobble positions of tRNA(Asp), tRNA(Asn), tRNA(His) and tRNA(Tyr). This Acinetobacter baylyi (strain ATCC 33305 / BD413 / ADP1) protein is Epoxyqueuosine reductase QueH.